Consider the following 224-residue polypeptide: Metalloproteinase inhibitor 4 (224 aa).

The first 29 residues, 1–29 (MPGSPRPAPSWVLLLRLLALLRPPGLGEA), serve as a signal peptide directing secretion. Cysteine 30 is a binding site for Zn(2+). 2 involved in metalloproteinase-binding regions span residues 30-33 (CSCA) and 99-100 (SS). Cystine bridges form between cysteine 30–cysteine 102, cysteine 32–cysteine 131, cysteine 42–cysteine 156, cysteine 158–cysteine 205, cysteine 163–cysteine 168, and cysteine 176–cysteine 197. An NTR domain is found at 30-156 (CSCAPAHPQQ…SLNHHYHLNC (127 aa)).

Belongs to the protease inhibitor I35 (TIMP) family. In terms of tissue distribution, abundant in heart and present at low levels in many other tissues.

The protein resides in the secreted. Its function is as follows. Complexes with metalloproteinases (such as collagenases) and irreversibly inactivates them by binding to their catalytic zinc cofactor. Known to act on MMP-1, MMP-2, MMP-3, MMP-7 and MMP-9. The chain is Metalloproteinase inhibitor 4 (TIMP4) from Homo sapiens (Human).